We begin with the raw amino-acid sequence, 394 residues long: Elongation factor Tu (394 aa).

The 195-residue stretch at 10–204 (KPHVNIGTIG…AVDSYIPQPV (195 aa)) folds into the tr-type G domain. Positions 19–26 (GHVDHGKT) are G1. A GTP-binding site is contributed by 19–26 (GHVDHGKT). Thr26 serves as a coordination point for Mg(2+). A G2 region spans residues 60 to 64 (GITIS). The tract at residues 81 to 84 (DCPG) is G3. GTP contacts are provided by residues 81 to 85 (DCPGH) and 136 to 139 (NKVD). The G4 stretch occupies residues 136-139 (NKVD). Residues 174–176 (SAL) are G5.

Belongs to the TRAFAC class translation factor GTPase superfamily. Classic translation factor GTPase family. EF-Tu/EF-1A subfamily. Monomer.

The protein localises to the cytoplasm. The catalysed reaction is GTP + H2O = GDP + phosphate + H(+). Functionally, GTP hydrolase that promotes the GTP-dependent binding of aminoacyl-tRNA to the A-site of ribosomes during protein biosynthesis. This chain is Elongation factor Tu, found in Rickettsia helvetica.